Here is a 111-residue protein sequence, read N- to C-terminus: MIRKNKWLRFQTVCRYIPLSLKNHNRLVIFVCQRIEWRYIFSTNTGHPLKNTCEMTGTDFSTDGLMRRYVTGGNNQWHTVASLHMTIMMNRIGTVADRQPKARKVKHGEMT.

This is an uncharacterized protein from Escherichia coli (strain K12).